Here is a 132-residue protein sequence, read N- to C-terminus: Small ribosomal subunit protein uS8 (132 aa).

The protein belongs to the universal ribosomal protein uS8 family. Part of the 30S ribosomal subunit. Contacts proteins S5 and S12.

Its function is as follows. One of the primary rRNA binding proteins, it binds directly to 16S rRNA central domain where it helps coordinate assembly of the platform of the 30S subunit. This chain is Small ribosomal subunit protein uS8, found in Flavobacterium psychrophilum (strain ATCC 49511 / DSM 21280 / CIP 103535 / JIP02/86).